The sequence spans 567 residues: CTD small phosphatase-like protein 2 (567 aa).

3 disordered regions span residues 31–53 (QQQQ…HQCE), 100–150 (ASST…FSSV), and 280–361 (NKEN…EEFN). Composition is skewed to low complexity over residues 100–118 (ASST…SPLK), 130–150 (SMND…FSSV), and 286–297 (ESNNSNSNSNSS). The span at 298-308 (PSFFHNLQQHP) shows a compositional bias: polar residues. The segment covering 309–332 (TSAATTTTTTTTTITTTSATTSII) has biased composition (low complexity). Positions 337–360 (NSDDEIDDECDDESEEEEEDEEEF) are enriched in acidic residues. Residues 386 to 544 (HSSPKISLVL…LQLVPFLESL (159 aa)) enclose the FCP1 homology domain.

The protein belongs to the CTDSPL2 family.

In terms of biological role, probable phosphatase. In Dictyostelium discoideum (Social amoeba), this protein is CTD small phosphatase-like protein 2 (ctdspl2).